Consider the following 1551-residue polypeptide: Serine/threonine-protein kinase MRCK gamma (1551 aa).

The region spanning 71–337 (FEILKVIGRG…LDDFRNHPFF (267 aa)) is the Protein kinase domain. ATP is bound by residues 77–85 (IGRGAFGEV) and Lys-100. Asp-195 functions as the Proton acceptor in the catalytic mechanism. Phosphoserine; by autocatalysis occurs at positions 216 and 228. A Phosphothreonine; by autocatalysis modification is found at Thr-234. An AGC-kinase C-terminal domain is found at 338–408 (EGVDWERLAS…TSGSHSPESS (71 aa)). Coiled-coil stretches lie at residues 406–678 (ESSS…SNWE) and 730–802 (KARR…RARG). Disordered stretches follow at residues 467–486 (KASL…QDSD), 655–675 (ELAQ…ETES), 801–849 (RGPV…PEGR), and 863–886 (TANT…PRSF). Residues 655-674 (ELAQEQESKQRLEGERRETE) are compositionally biased toward basic and acidic residues. Basic and acidic residues predominate over residues 835 to 849 (ATRHGGEPDLRPEGR). Residues 878-927 (SHTLRPRSFPSPTKCLRCTSLMLGLGRQGLGCDACGYFCHTTCAPQAPPC) form a Phorbol-ester/DAG-type zinc finger. The PH domain occupies 947–1066 (GTAYEGFLSV…WLQVLGELQR (120 aa)). The CNH domain maps to 1092 to 1366 (LPHTLCAAIL…RPLNPEGSLF (275 aa)). Residues 1437-1450 (ISPPTNFNHLVHVG) enclose the CRIB domain. A disordered region spans residues 1442–1551 (NFNHLVHVGP…PLSPELESSP (110 aa)). The segment covering 1457-1470 (GARDKSPAPEEKGR) has biased composition (basic and acidic residues). Ser-1482 carries the post-translational modification Phosphoserine. A compositionally biased stretch (polar residues) spans 1511 to 1533 (TSLSSESVSCPQGSLSPATSLMQ). The span at 1540 to 1551 (SLPLSPELESSP) shows a compositional bias: low complexity.

This sequence belongs to the protein kinase superfamily. AGC Ser/Thr protein kinase family. DMPK subfamily. Homodimer and homotetramer via the coiled coil regions. Interacts tightly with GTP-bound but not GDP-bound CDC42. Requires Mg(2+) as cofactor. As to expression, expressed in heart and skeletal muscle.

Its subcellular location is the cytoplasm. It carries out the reaction L-seryl-[protein] + ATP = O-phospho-L-seryl-[protein] + ADP + H(+). The catalysed reaction is L-threonyl-[protein] + ATP = O-phospho-L-threonyl-[protein] + ADP + H(+). With respect to regulation, maintained in an inactive, closed conformation by an interaction between the kinase domain and the negative autoregulatory C-terminal coiled-coil region. Agonist binding to the phorbol ester binding site disrupts this, releasing the kinase domain to allow N-terminus-mediated dimerization and kinase activation by transautophosphorylation. In terms of biological role, may act as a downstream effector of CDC42 in cytoskeletal reorganization. Contributes to the actomyosin contractility required for cell invasion, through the regulation of MYPT1 and thus MLC2 phosphorylation. This chain is Serine/threonine-protein kinase MRCK gamma, found in Homo sapiens (Human).